Here is a 569-residue protein sequence, read N- to C-terminus: Arginine--tRNA ligase (569 aa).

The 'HIGH' region motif lies at 123-133; sequence ANPNGPLHVGH.

Belongs to the class-I aminoacyl-tRNA synthetase family.

It is found in the cytoplasm. It catalyses the reaction tRNA(Arg) + L-arginine + ATP = L-arginyl-tRNA(Arg) + AMP + diphosphate. This is Arginine--tRNA ligase from Methanosarcina barkeri (strain Fusaro / DSM 804).